The sequence spans 261 residues: Urease accessory protein UreD (261 aa).

This sequence belongs to the UreD family. As to quaternary structure, ureD, UreF and UreG form a complex that acts as a GTP-hydrolysis-dependent molecular chaperone, activating the urease apoprotein by helping to assemble the nickel containing metallocenter of UreC. The UreE protein probably delivers the nickel.

The protein resides in the cytoplasm. In terms of biological role, required for maturation of urease via the functional incorporation of the urease nickel metallocenter. The chain is Urease accessory protein UreD from Haemophilus influenzae (strain ATCC 51907 / DSM 11121 / KW20 / Rd).